Consider the following 214-residue polypeptide: Adenylate kinase (214 aa).

Gly-10–Thr-15 serves as a coordination point for ATP. Residues Ser-30 to Val-59 are NMP. Residues Thr-31, Arg-36, Gln-57–Val-59, Gly-85–Arg-88, and Gln-92 each bind AMP. An LID region spans residues Gly-122–Asp-159. Residues Arg-123 and Thr-132–Tyr-133 each bind ATP. AMP is bound by residues Arg-156 and Arg-167. Gln-200 provides a ligand contact to ATP.

Belongs to the adenylate kinase family. As to quaternary structure, monomer.

Its subcellular location is the cytoplasm. It catalyses the reaction AMP + ATP = 2 ADP. It participates in purine metabolism; AMP biosynthesis via salvage pathway; AMP from ADP: step 1/1. In terms of biological role, catalyzes the reversible transfer of the terminal phosphate group between ATP and AMP. Plays an important role in cellular energy homeostasis and in adenine nucleotide metabolism. This Aeromonas salmonicida (strain A449) protein is Adenylate kinase.